The chain runs to 360 residues: S-adenosylmethionine:tRNA ribosyltransferase-isomerase (360 aa).

It belongs to the QueA family. As to quaternary structure, monomer.

It is found in the cytoplasm. It catalyses the reaction 7-aminomethyl-7-carbaguanosine(34) in tRNA + S-adenosyl-L-methionine = epoxyqueuosine(34) in tRNA + adenine + L-methionine + 2 H(+). Its pathway is tRNA modification; tRNA-queuosine biosynthesis. In terms of biological role, transfers and isomerizes the ribose moiety from AdoMet to the 7-aminomethyl group of 7-deazaguanine (preQ1-tRNA) to give epoxyqueuosine (oQ-tRNA). In Nitrobacter winogradskyi (strain ATCC 25391 / DSM 10237 / CIP 104748 / NCIMB 11846 / Nb-255), this protein is S-adenosylmethionine:tRNA ribosyltransferase-isomerase.